The chain runs to 134 residues: Large ribosomal subunit protein uL18 (134 aa).

Residues 1 to 25 form a disordered region; the sequence is MSNTAQNEKRLPVGKDISTRRRTAR. Residues 7–19 show a composition bias toward basic and acidic residues; that stretch reads NEKRLPVGKDIST.

Belongs to the universal ribosomal protein uL18 family. In terms of assembly, part of the 50S ribosomal subunit; part of the 5S rRNA/L5/L18/L25 subcomplex. Contacts the 5S and 23S rRNAs.

In terms of biological role, this is one of the proteins that bind and probably mediate the attachment of the 5S RNA into the large ribosomal subunit, where it forms part of the central protuberance. The sequence is that of Large ribosomal subunit protein uL18 from Corynebacterium jeikeium (strain K411).